The following is a 512-amino-acid chain: Glutamyl-tRNA(Gln) amidotransferase subunit A (512 aa).

Catalysis depends on charge relay system residues Lys-82 and Ser-157. The active-site Acyl-ester intermediate is Ser-181.

It belongs to the amidase family. GatA subfamily. Heterotrimer of A, B and C subunits.

It catalyses the reaction L-glutamyl-tRNA(Gln) + L-glutamine + ATP + H2O = L-glutaminyl-tRNA(Gln) + L-glutamate + ADP + phosphate + H(+). In terms of biological role, allows the formation of correctly charged Gln-tRNA(Gln) through the transamidation of misacylated Glu-tRNA(Gln) in organisms which lack glutaminyl-tRNA synthetase. The reaction takes place in the presence of glutamine and ATP through an activated gamma-phospho-Glu-tRNA(Gln). This chain is Glutamyl-tRNA(Gln) amidotransferase subunit A, found in Bordetella petrii (strain ATCC BAA-461 / DSM 12804 / CCUG 43448).